Here is a 215-residue protein sequence, read N- to C-terminus: Phosphatidylserine decarboxylase proenzyme (215 aa).

Catalysis depends on Ser-184, which acts as the Schiff-base intermediate with substrate; via pyruvic acid. Ser-184 is modified (pyruvic acid (Ser); by autocatalysis).

This sequence belongs to the phosphatidylserine decarboxylase family. PSD-A subfamily. Heterodimer of a large membrane-associated beta subunit and a small pyruvoyl-containing alpha subunit. Pyruvate is required as a cofactor. In terms of processing, is synthesized initially as an inactive proenzyme. Formation of the active enzyme involves a self-maturation process in which the active site pyruvoyl group is generated from an internal serine residue via an autocatalytic post-translational modification. Two non-identical subunits are generated from the proenzyme in this reaction, and the pyruvate is formed at the N-terminus of the alpha chain, which is derived from the carboxyl end of the proenzyme. The post-translation cleavage follows an unusual pathway, termed non-hydrolytic serinolysis, in which the side chain hydroxyl group of the serine supplies its oxygen atom to form the C-terminus of the beta chain, while the remainder of the serine residue undergoes an oxidative deamination to produce ammonia and the pyruvoyl prosthetic group on the alpha chain.

The protein localises to the cell membrane. The catalysed reaction is a 1,2-diacyl-sn-glycero-3-phospho-L-serine + H(+) = a 1,2-diacyl-sn-glycero-3-phosphoethanolamine + CO2. The protein operates within phospholipid metabolism; phosphatidylethanolamine biosynthesis; phosphatidylethanolamine from CDP-diacylglycerol: step 2/2. Its function is as follows. Catalyzes the formation of phosphatidylethanolamine (PtdEtn) from phosphatidylserine (PtdSer). This is Phosphatidylserine decarboxylase proenzyme from Ralstonia pickettii (strain 12J).